Consider the following 361-residue polypeptide: Peptide chain release factor 1 (361 aa).

Gln-236 carries the N5-methylglutamine modification.

Belongs to the prokaryotic/mitochondrial release factor family. Post-translationally, methylated by PrmC. Methylation increases the termination efficiency of RF1.

The protein resides in the cytoplasm. In terms of biological role, peptide chain release factor 1 directs the termination of translation in response to the peptide chain termination codons UAG and UAA. The sequence is that of Peptide chain release factor 1 from Lactobacillus delbrueckii subsp. bulgaricus (strain ATCC BAA-365 / Lb-18).